Consider the following 220-residue polypeptide: Protein DGCR6L (220 aa).

A coiled-coil region spans residues 76-159; it reads KSLYNQRLRL…ADQQSTLEKA (84 aa).

It belongs to the gonadal family. As to expression, widely expressed in fetal and adult tissues. Highest expression in liver, heart and skeletal muscle. Lower levels in pancreas and placenta. Weak expression in brain.

The protein localises to the nucleus. Its function is as follows. May play a role in neural crest cell migration into the third and fourth pharyngeal pouches. This is Protein DGCR6L (DGCR6L) from Homo sapiens (Human).